Here is a 495-residue protein sequence, read N- to C-terminus: UDP-N-acetylmuramate--L-alanine ligase (495 aa).

120–126 (GSHGKTT) is an ATP binding site.

Belongs to the MurCDEF family.

The protein localises to the cytoplasm. The catalysed reaction is UDP-N-acetyl-alpha-D-muramate + L-alanine + ATP = UDP-N-acetyl-alpha-D-muramoyl-L-alanine + ADP + phosphate + H(+). Its pathway is cell wall biogenesis; peptidoglycan biosynthesis. In terms of biological role, cell wall formation. The polypeptide is UDP-N-acetylmuramate--L-alanine ligase (Rickettsia prowazekii (strain Madrid E)).